The following is a 309-amino-acid chain: E3 ubiquitin-protein ligase SINAT5 (309 aa).

The RING-type zinc finger occupies 46–82 (CPVCTNSMYPPIHQCHNGHTLCSTCKSRVHNRCPTCR). An SBD region spans residues 96 to 289 (VAESLELPCK…KELKLRVTGR (194 aa)). Residues 99–159 (SLELPCKYYN…LVAHLRDDHK (61 aa)) form an SIAH-type zinc finger. Residues C104, C111, H123, C127, C134, C141, H153, and H158 each coordinate Zn(2+).

The protein belongs to the SINA (Seven in absentia) family. Homodimer; homodimerization is essential for its function. Interacts with UBC28 and NAC021/NAC022. Interacts with SINAT6. Interacts with ATG6 and TRAF1A. Interacts with WAV3. Interacts with FREE1. Expressed at low level in the vascular tissue of mature roots. Expressed in lateral roots and in elongation zone of the main root upon stimulation by auxin. Colocalizes with NAC021/NAC022.

The protein resides in the nucleus. It localises to the cytoplasm. The catalysed reaction is S-ubiquitinyl-[E2 ubiquitin-conjugating enzyme]-L-cysteine + [acceptor protein]-L-lysine = [E2 ubiquitin-conjugating enzyme]-L-cysteine + N(6)-ubiquitinyl-[acceptor protein]-L-lysine.. It participates in protein modification; protein ubiquitination. Its function is as follows. E3 ubiquitin-protein ligase that mediates ubiquitination and subsequent proteasomal degradation of target proteins. E3 ubiquitin ligases accept ubiquitin from an E2 ubiquitin-conjugating enzyme in the form of a thioester and then directly transfers the ubiquitin to targeted substrates. Mediates the ubiquitination and proteasomal-dependent degradation of NAC021/NAC022, a transcription activator that functions downstream of the auxin signals, thereby acting as a down-regulator of auxin signals. Involved in the formation of lateral roots. Is antagonist to SINAT1, SINAT2, SINAT3 and SINAT4 by suppressing FREE1 ubiquitination and degradation mediated by SINAT1, SINAT2, SINAT3 and SINAT4, and promoting FREE1 accumulation. This is E3 ubiquitin-protein ligase SINAT5 from Arabidopsis thaliana (Mouse-ear cress).